The primary structure comprises 149 residues: Envelope glycoprotein UL4 (149 aa).

The first 18 residues, 1 to 18, serve as a signal peptide directing secretion; that stretch reads MMLRTWISLPMVLLDAYC. Residues asparagine 46, asparagine 51, asparagine 59, asparagine 67, asparagine 105, asparagine 109, asparagine 119, asparagine 136, and asparagine 145 are each glycosylated (N-linked (GlcNAc...) asparagine; by host).

Belongs to the RL11 family. In terms of processing, N-glycosylated and possibly O-glycosylated.

Its subcellular location is the virion membrane. The protein is Envelope glycoprotein UL4 (UL4) of Human cytomegalovirus (strain Merlin) (HHV-5).